Reading from the N-terminus, the 289-residue chain is Elongation factor Ts (289 aa).

The segment at threonine 82–leucine 85 is involved in Mg(2+) ion dislocation from EF-Tu.

It belongs to the EF-Ts family.

It localises to the cytoplasm. Functionally, associates with the EF-Tu.GDP complex and induces the exchange of GDP to GTP. It remains bound to the aminoacyl-tRNA.EF-Tu.GTP complex up to the GTP hydrolysis stage on the ribosome. The protein is Elongation factor Ts of Pseudomonas paraeruginosa (strain DSM 24068 / PA7) (Pseudomonas aeruginosa (strain PA7)).